The chain runs to 526 residues: GMP synthase [glutamine-hydrolyzing] (526 aa).

The 199-residue stretch at 9-207 folds into the Glutamine amidotransferase type-1 domain; sequence RILILNFGSQ…VLDICSCQGR (199 aa). Cys86 (nucleophile) is an active-site residue. Residues His181 and Glu183 contribute to the active site. Residues 208–401 form the GMPS ATP-PPase domain; it reads WTPNNIKENI…LGLPFHMLYR (194 aa). 235–241 serves as a coordination point for ATP; sequence SGGVDST.

Homodimer.

It catalyses the reaction XMP + L-glutamine + ATP + H2O = GMP + L-glutamate + AMP + diphosphate + 2 H(+). It functions in the pathway purine metabolism; GMP biosynthesis; GMP from XMP (L-Gln route): step 1/1. Catalyzes the synthesis of GMP from XMP. This is GMP synthase [glutamine-hydrolyzing] from Baumannia cicadellinicola subsp. Homalodisca coagulata.